Reading from the N-terminus, the 693-residue chain is Elongation factor G (693 aa).

One can recognise a tr-type G domain in the interval 8–282; that stretch reads EKTRNIGIMA…AVVDYLPSPL (275 aa). GTP-binding positions include 17–24, 81–85, and 135–138; these read AHVDAGKT, DTPGH, and NKMD.

The protein belongs to the TRAFAC class translation factor GTPase superfamily. Classic translation factor GTPase family. EF-G/EF-2 subfamily.

Its subcellular location is the cytoplasm. Functionally, catalyzes the GTP-dependent ribosomal translocation step during translation elongation. During this step, the ribosome changes from the pre-translocational (PRE) to the post-translocational (POST) state as the newly formed A-site-bound peptidyl-tRNA and P-site-bound deacylated tRNA move to the P and E sites, respectively. Catalyzes the coordinated movement of the two tRNA molecules, the mRNA and conformational changes in the ribosome. The sequence is that of Elongation factor G from Streptococcus mutans serotype c (strain ATCC 700610 / UA159).